We begin with the raw amino-acid sequence, 101 residues long: uncharacterized protein (101 aa).

The segment covering 65–79 (QEAAAPAGPQEPAEA) has biased composition (low complexity). A disordered region spans residues 65–101 (QEAAAPAGPQEPAEASGDAGKKEEVEEEEIEIDFGMF). A compositionally biased stretch (acidic residues) spans 89–101 (VEEEEIEIDFGMF).

This is an uncharacterized protein from Encephalitozoon cuniculi (strain GB-M1) (Microsporidian parasite).